The chain runs to 154 residues: Probable chemoreceptor glutamine deamidase CheD (154 aa).

Belongs to the CheD family.

It catalyses the reaction L-glutaminyl-[protein] + H2O = L-glutamyl-[protein] + NH4(+). Its function is as follows. Probably deamidates glutamine residues to glutamate on methyl-accepting chemotaxis receptors (MCPs), playing an important role in chemotaxis. This chain is Probable chemoreceptor glutamine deamidase CheD, found in Methanococcus maripaludis (strain C5 / ATCC BAA-1333).